A 240-amino-acid chain; its full sequence is Flavin-dependent thymidylate synthase (240 aa).

Positions 13 to 235 constitute a ThyX domain; that stretch reads ITVELVKHSA…PETHAAFEKQ (223 aa). Residues serine 64, 87 to 89, and glutamate 95 contribute to the FAD site; that span reads RHR. DUMP contacts are provided by residues 84–87, 95–99, and arginine 167; these read EFMR and EESGR. A ThyX motif motif is present at residues 87–97; it reads RHRIASYNEES. Residues 183–185 and asparagine 189 contribute to the FAD site; that span reads NAR. Residue arginine 194 coordinates dUMP. Catalysis depends on arginine 194, which acts as the Involved in ionization of N3 of dUMP, leading to its activation.

It belongs to the thymidylate synthase ThyX family. In terms of assembly, homotetramer. FAD is required as a cofactor.

It catalyses the reaction dUMP + (6R)-5,10-methylene-5,6,7,8-tetrahydrofolate + NADPH + H(+) = dTMP + (6S)-5,6,7,8-tetrahydrofolate + NADP(+). The protein operates within pyrimidine metabolism; dTTP biosynthesis. Its function is as follows. Catalyzes the reductive methylation of 2'-deoxyuridine-5'-monophosphate (dUMP) to 2'-deoxythymidine-5'-monophosphate (dTMP) while utilizing 5,10-methylenetetrahydrofolate (mTHF) as the methyl donor, and NADPH and FADH(2) as the reductant. In Tropheryma whipplei (strain TW08/27) (Whipple's bacillus), this protein is Flavin-dependent thymidylate synthase.